The following is a 249-amino-acid chain: Ubiquinone biosynthesis O-methyltransferase (249 aa).

S-adenosyl-L-methionine contacts are provided by Arg41, Gly72, Asp93, and Met136.

It belongs to the methyltransferase superfamily. UbiG/COQ3 family.

It carries out the reaction a 3-demethylubiquinol + S-adenosyl-L-methionine = a ubiquinol + S-adenosyl-L-homocysteine + H(+). It catalyses the reaction a 3-(all-trans-polyprenyl)benzene-1,2-diol + S-adenosyl-L-methionine = a 2-methoxy-6-(all-trans-polyprenyl)phenol + S-adenosyl-L-homocysteine + H(+). It functions in the pathway cofactor biosynthesis; ubiquinone biosynthesis. O-methyltransferase that catalyzes the 2 O-methylation steps in the ubiquinone biosynthetic pathway. This Methylobacterium sp. (strain 4-46) protein is Ubiquinone biosynthesis O-methyltransferase.